A 341-amino-acid chain; its full sequence is Platelet-activating factor receptor (341 aa).

At 1–16 the chain is on the extracellular side; that stretch reads MEHNGSFRVDSEFRYT. The N-linked (GlcNAc...) asparagine glycan is linked to asparagine 4. Residues 17–38 traverse the membrane as a helical segment; sequence LFPIVYSVIFILGVVANGYVLW. Residues 39-54 lie on the Cytoplasmic side of the membrane; that stretch reads VFANLYPSKKLNEIKI. The chain crosses the membrane as a helical span at residues 55–74; that stretch reads FMVNLTMADLLFLITLPLWI. At 75 to 91 the chain is on the extracellular side; the sequence is VYYYNEGDWILPNFLCN. The cysteines at positions 90 and 173 are disulfide-linked. A helical transmembrane segment spans residues 92–113; it reads VAGCLFFINTYCSVAFLGVITY. The Cytoplasmic portion of the chain corresponds to 114-133; it reads NRYQAVAYPIKTAQATTRKR. Residues 134–155 form a helical membrane-spanning segment; sequence GISLSLIIWVSIVATASYFLAT. Residues 156-184 are Extracellular-facing; sequence DSTNLVPNKDGSGNITRCFEHYEPYSVPI. Residue asparagine 169 is glycosylated (N-linked (GlcNAc...) asparagine). Residues 185–205 form a helical membrane-spanning segment; that stretch reads LVVHVFIAFCFFLVFFLIFYC. At 206 to 233 the chain is on the cytoplasmic side; that stretch reads NLVIIHTLLTQPMRQQRKAGVKRRALWM. The chain crosses the membrane as a helical span at residues 234-254; that stretch reads VCTVLAVFIICFVPHHVVQLP. Residues 255–275 lie on the Extracellular side of the membrane; that stretch reads WTLAELGYQTNFHQAINDAHQ. Residues 276–295 traverse the membrane as a helical segment; the sequence is ITLCLLSTNCVLDPVIYCFL. The Cytoplasmic segment spans residues 296–341; the sequence is TKKFRKHLSEKFYSMRSSRKCSRATSDTCTEVIVPANQTPIVSLKN.

Belongs to the G-protein coupled receptor 1 family. In terms of assembly, interacts with ARRB1. In terms of tissue distribution, found in a range of organs. Expressed most strongly in spleen, followed by skeletal muscle, lung and small intestine. Expressed at moderate levels in the heart. Expressed at relatively low levels in the brain, liver and kidney.

The protein resides in the cell membrane. Receptor for platelet activating factor, a chemotactic phospholipid mediator that possesses potent inflammatory, smooth-muscle contractile and hypotensive activity. Seems to mediate its action via a G protein that activates a phosphatidylinositol-calcium second messenger system. This Mus musculus (Mouse) protein is Platelet-activating factor receptor (Ptafr).